A 474-amino-acid chain; its full sequence is Selection and upkeep of intraepithelial T-cells protein 4 (474 aa).

The signal sequence occupies residues 1 to 25; that stretch reads MGATEVLTSYCVVLCLLQMVALSSG. Residues 26–241 lie on the Extracellular side of the membrane; sequence HFTVIGSQRP…VLSGELFSWK (216 aa). One can recognise an Ig-like V-type domain in the interval 27-140; it reads FTVIGSQRPI…EEHITEVKVT (114 aa). 2 cysteine pairs are disulfide-bonded: Cys-48–Cys-122 and Cys-162–Cys-216. N-linked (GlcNAc...) asparagine glycans are attached at residues Asn-111 and Asn-199. The 94-residue stretch at 141–234 folds into the Ig-like C1-type domain; it reads ATSSDIQILM…QEQSINIVLS (94 aa). A helical transmembrane segment spans residues 242 to 262; the sequence is IVWIMILSTISFVMIDFCMTY. Topologically, residues 263 to 298 are cytoplasmic; the sequence is CVQQQLIHEESLSTVDNDQCESDQSEGTCYKRNYPW. The helical transmembrane segment at 299–319 threads the bilayer; the sequence is IIIAVVPIISVFAIIGVMLFL. Residues 320–341 are Extracellular-facing; the sequence is HLEQRVTILEQHFELDTLWLED. The helical transmembrane segment at 342 to 362 threads the bilayer; the sequence is ISVILCVVIVSNINLIPLIYF. Topologically, residues 363-381 are cytoplasmic; it reads RLHEHVPRFKDRSPILNKA. Residues 382–402 form a helical membrane-spanning segment; that stretch reads VVFLHFIYFSIVCGTILLVHL. The Extracellular portion of the chain corresponds to 403–420; that stretch reads QLRNKVSISDSLFSLYNS. The chain crosses the membrane as a helical span at residues 421-441; that stretch reads WLTDISMILGFLLSIFIVTTI. The Cytoplasmic portion of the chain corresponds to 442 to 474; it reads AKSSLFNKKWCIGLCIHMKEAEATGGPCEGEEL.

It belongs to the SKINT family. In terms of tissue distribution, expressed in skin, thymus and, to a lower extent, bladder and testis.

It localises to the membrane. Functionally, may act by engaging a cell surface molecule on immature T-cells in the embryonic thymus. The chain is Selection and upkeep of intraepithelial T-cells protein 4 (Skint4) from Mus musculus (Mouse).